Reading from the N-terminus, the 89-residue chain is Small ribosomal subunit protein uS15 (89 aa).

Belongs to the universal ribosomal protein uS15 family. Part of the 30S ribosomal subunit. Forms a bridge to the 50S subunit in the 70S ribosome, contacting the 23S rRNA.

Functionally, one of the primary rRNA binding proteins, it binds directly to 16S rRNA where it helps nucleate assembly of the platform of the 30S subunit by binding and bridging several RNA helices of the 16S rRNA. In terms of biological role, forms an intersubunit bridge (bridge B4) with the 23S rRNA of the 50S subunit in the ribosome. The sequence is that of Small ribosomal subunit protein uS15 from Staphylococcus aureus (strain JH1).